Reading from the N-terminus, the 315-residue chain is NAD kinase (315 aa).

Catalysis depends on Asp-91, which acts as the Proton acceptor. Residues 91-92, Arg-96, 165-166, Asp-195, and 206-211 each bind NAD(+); these read DG, NE, and TAYAFS.

The protein belongs to the NAD kinase family. A divalent metal cation is required as a cofactor.

It localises to the cytoplasm. It carries out the reaction NAD(+) + ATP = ADP + NADP(+) + H(+). In terms of biological role, involved in the regulation of the intracellular balance of NAD and NADP, and is a key enzyme in the biosynthesis of NADP. Catalyzes specifically the phosphorylation on 2'-hydroxyl of the adenosine moiety of NAD to yield NADP. This Rhodococcus erythropolis (strain PR4 / NBRC 100887) protein is NAD kinase.